Consider the following 158-residue polypeptide: Ribosome-binding factor A (158 aa).

The interval 127–158 is disordered; the sequence is RQGAVHAGDADPYKESAAEEPAAYEDDERRPD. A compositionally biased stretch (basic and acidic residues) spans 134 to 143; that stretch reads GDADPYKESA.

This sequence belongs to the RbfA family. As to quaternary structure, monomer. Binds 30S ribosomal subunits, but not 50S ribosomal subunits or 70S ribosomes.

It is found in the cytoplasm. One of several proteins that assist in the late maturation steps of the functional core of the 30S ribosomal subunit. Associates with free 30S ribosomal subunits (but not with 30S subunits that are part of 70S ribosomes or polysomes). Required for efficient processing of 16S rRNA. May interact with the 5'-terminal helix region of 16S rRNA. The polypeptide is Ribosome-binding factor A (Mycobacteroides abscessus (strain ATCC 19977 / DSM 44196 / CCUG 20993 / CIP 104536 / JCM 13569 / NCTC 13031 / TMC 1543 / L948) (Mycobacterium abscessus)).